Here is a 202-residue protein sequence, read N- to C-terminus: PXMP2/4 family protein 1 (202 aa).

The next 4 membrane-spanning stretches (helical) occupy residues 21–41 (PVIT…TLAQ), 54–72 (LMMC…HFWF), 138–154 (KAWM…FRFV), and 161–177 (LISN…LSTV).

Belongs to the peroxisomal membrane protein PXMP2/4 family.

It localises to the membrane. The sequence is that of PXMP2/4 family protein 1 from Dictyostelium discoideum (Social amoeba).